We begin with the raw amino-acid sequence, 77 residues long: Exodeoxyribonuclease 7 small subunit (77 aa).

Belongs to the XseB family. Heterooligomer composed of large and small subunits.

The protein resides in the cytoplasm. It carries out the reaction Exonucleolytic cleavage in either 5'- to 3'- or 3'- to 5'-direction to yield nucleoside 5'-phosphates.. Bidirectionally degrades single-stranded DNA into large acid-insoluble oligonucleotides, which are then degraded further into small acid-soluble oligonucleotides. The sequence is that of Exodeoxyribonuclease 7 small subunit from Alkaliphilus oremlandii (strain OhILAs) (Clostridium oremlandii (strain OhILAs)).